Reading from the N-terminus, the 609-residue chain is Chaperone protein DnaK (609 aa).

The residue at position 172 (Thr172) is a Phosphothreonine; by autocatalysis. Positions 578–609 (QAQAQQQAGAGGAAKKDENVVDAEFEEVKDDK) are disordered. The segment covering 597-609 (VVDAEFEEVKDDK) has biased composition (acidic residues).

This sequence belongs to the heat shock protein 70 family.

Acts as a chaperone. This is Chaperone protein DnaK from Geobacillus sp. (strain WCH70).